We begin with the raw amino-acid sequence, 271 residues long: Imidazole glycerol phosphate synthase subunit HisF (271 aa).

Active-site residues include Asp12 and Asp131.

This sequence belongs to the HisA/HisF family. As to quaternary structure, heterodimer of HisH and HisF.

The protein resides in the cytoplasm. It carries out the reaction 5-[(5-phospho-1-deoxy-D-ribulos-1-ylimino)methylamino]-1-(5-phospho-beta-D-ribosyl)imidazole-4-carboxamide + L-glutamine = D-erythro-1-(imidazol-4-yl)glycerol 3-phosphate + 5-amino-1-(5-phospho-beta-D-ribosyl)imidazole-4-carboxamide + L-glutamate + H(+). Its pathway is amino-acid biosynthesis; L-histidine biosynthesis; L-histidine from 5-phospho-alpha-D-ribose 1-diphosphate: step 5/9. IGPS catalyzes the conversion of PRFAR and glutamine to IGP, AICAR and glutamate. The HisF subunit catalyzes the cyclization activity that produces IGP and AICAR from PRFAR using the ammonia provided by the HisH subunit. This is Imidazole glycerol phosphate synthase subunit HisF from Methanospirillum hungatei JF-1 (strain ATCC 27890 / DSM 864 / NBRC 100397 / JF-1).